The following is a 299-amino-acid chain: Probable inactive heme oxygenase 2, chloroplastic (299 aa).

Positions Met-1–Arg-15 are enriched in low complexity. 3 disordered regions span residues Met-1 to Ser-20, Leu-45 to Pro-70, and Asp-96 to Trp-126. A chloroplast-targeting transit peptide spans Met-1–Val-83. Residues Cys-46 to Ala-57 show a composition bias toward polar residues. Basic residues predominate over residues Ser-58–Lys-67. Residues Glu-105–Lys-122 show a composition bias toward acidic residues.

Belongs to the heme oxygenase family. As to expression, widely expressed at low levels.

It is found in the plastid. It localises to the chloroplast. In terms of biological role, probable inactive heme oxygenase. Binds protoporphyrin IX, a precursor for both heme and chlorophyll biosynthesis. Plays a minor role in phytochrome assembly and photomorphogenesis. The sequence is that of Probable inactive heme oxygenase 2, chloroplastic (HO2) from Arabidopsis thaliana (Mouse-ear cress).